A 398-amino-acid chain; its full sequence is Serine/threonine-protein phosphatase 2A activator (398 aa).

3 residues coordinate ATP: Arg-137, Thr-142, and Gly-143. Mg(2+)-binding residues include Gly-197 and Asp-203. ATP contacts are provided by Pro-293, Gln-296, and His-297. Residues 343-352 are compositionally biased toward pro residues; that stretch reads PVATAPPPPA. Positions 343-398 are disordered; that stretch reads PVATAPPPPAESLSIEQNVGDSSSESSDNSVVLRPSTSSSSLVAAAEGSGDKPSKE. Residues 363-388 are compositionally biased toward low complexity; that stretch reads DSSSESSDNSVVLRPSTSSSSLVAAA.

The protein belongs to the PTPA-type PPIase family. As to quaternary structure, associates with PP2A heterodimeric core enzyme PP2A(D), composed of a catalytic subunit (subunit C) and a constant regulatory subunit (PR65 or subunit A). Interacts with the catalytic subunit Pp4-19C of the serine/threonine-protein phosphatase 4 (PP4) complex; thereby mediating basal localization of the Miranda (Mira) complex; probably by facilitating the dephosphorylation of Mira.

Its subcellular location is the cytoplasm. It is found in the nucleus. It carries out the reaction [protein]-peptidylproline (omega=180) = [protein]-peptidylproline (omega=0). PPIases accelerate the folding of proteins. It catalyzes the cis-trans isomerization of proline imidic peptide bonds in oligopeptides. Acts as a regulatory subunit for serine/threonine-protein phosphatase 2A (PP2A). Modulates PP2A activity or substrate specificity, probably by inducing a conformational change in the catalytic subunit, a proposed direct target of the PPIase. Acts as mediator for the basal localization of the Miranda (Mira) complex during mitosis of larval neuroblast asymmetric division. Associates with the phosphatase 4 (PP4) complex to mediate basal localization of Mira; probably by facilitating the dephosphorylation of Mira. Cortical association of Mira mediated by the PTPA-PP4 complex seems to be independent of aPKC activity. This is Serine/threonine-protein phosphatase 2A activator from Drosophila melanogaster (Fruit fly).